Consider the following 221-residue polypeptide: Placenta growth factor (221 aa).

The first 18 residues, 1–18, serve as a signal peptide directing secretion; that stretch reads MPVMRLFPCFLQLLAGLA. Asn-33 carries N-linked (GlcNAc...) asparagine glycosylation. 3 cysteine pairs are disulfide-bonded: Cys-52-Cys-94, Cys-83-Cys-128, and Cys-87-Cys-130. A glycan (N-linked (GlcNAc...) asparagine) is linked at Asn-101. Residues 175–221 are disordered; that stretch reads QSAVWPSSPVPEEIPRMHPGRNGKKQQRKPLREKMKPERCGDAVPRR. Residues 192–203 show a composition bias toward basic residues; the sequence is HPGRNGKKQQRK. Residues 193–213 form a heparin-binding region; the sequence is PGRNGKKQQRKPLREKMKPER. Residues 204-221 are compositionally biased toward basic and acidic residues; it reads PLREKMKPERCGDAVPRR.

Belongs to the PDGF/VEGF growth factor family. In terms of assembly, antiparallel homodimer; disulfide-linked. Also found as heterodimer with VEGFA/VEGF. Isoform PlGF-3 is found both as homodimer and as monomer. Post-translationally, N-glycosylated. As to expression, while the three isoforms are present in most placental tissues, PlGF-2 is specific to early (8 week) placenta and only PlGF-1 is found in the colon and mammary carcinomas.

The protein localises to the secreted. Functionally, growth factor active in angiogenesis and endothelial cell growth, stimulating their proliferation and migration. It binds to the receptor FLT1/VEGFR-1. Isoform PlGF-2 binds NRP1/neuropilin-1 and NRP2/neuropilin-2 in a heparin-dependent manner. Also promotes cell tumor growth. The chain is Placenta growth factor (PGF) from Homo sapiens (Human).